We begin with the raw amino-acid sequence, 396 residues long: E3 ubiquitin-protein transferase MAEA (396 aa).

The LisH domain occupies 121–153 (KKKRMDRMMVEHLLRCGYYNTAVKLARQSEIED). Positions 159 to 216 (MFLTAKEVEESLERQETMTCLAWCHDNKSRLRKMKSCLEFSLRIQEFIELIRQNKRLD) constitute a CTLH domain. Residues 314–381 (CPVCSKSLNK…QDDKVVCPRT (68 aa)) form an RING-Gid-type zinc finger.

Identified in the CTLH complex that contains at least MAEA, RMND5A, GID8, WDR26, and RANBP9 and/or RANBP10 as the catalytic core. Interacts with F-actin.

It localises to the nucleus matrix. It is found in the cell membrane. The protein resides in the cytoplasm. Its subcellular location is the cytoskeleton. It catalyses the reaction S-ubiquitinyl-[E2 ubiquitin-conjugating enzyme]-L-cysteine + [acceptor protein]-L-lysine = [E2 ubiquitin-conjugating enzyme]-L-cysteine + N(6)-ubiquitinyl-[acceptor protein]-L-lysine.. In terms of biological role, core component of the CTLH E3 ubiquitin-protein ligase complex that selectively accepts ubiquitin from UBE2H and mediates ubiquitination and subsequent proteasomal degradation of the transcription factor HBP1. MAEA and RMND5A are both required for catalytic activity of the CTLH E3 ubiquitin-protein ligase complex. MAEA is required for normal cell proliferation. The CTLH E3 ubiquitin-protein ligase complex is not required for the degradation of enzymes involved in gluconeogenesis, such as FBP1. Plays a role in erythroblast maturation and in the development of mature macrophages. Mediates the attachment of erythroid cell to mature macrophages; this MAEA-mediated contact inhibits erythroid cell apoptosis. Participates in erythroblastic island formation, which is the functional unit of definitive erythropoiesis. Associates with F-actin to regulate actin distribution in erythroblasts and macrophages. May contribute to nuclear architecture and cells division events. This chain is E3 ubiquitin-protein transferase MAEA (maea), found in Xenopus laevis (African clawed frog).